Consider the following 1066-residue polypeptide: UPF0182 protein BL1029 (1066 aa).

Residues 12-74 (GNGGDSRRNN…KPASGGSGGS (63 aa)) are disordered. The span at 44–61 (NAGPSGSSRPPRGPANPR) shows a compositional bias: low complexity. The next 7 membrane-spanning stretches (helical) occupy residues 77 to 97 (SKIL…FFGL), 126 to 146 (LWVA…WLAI), 179 to 199 (VAVV…NANW), 235 to 255 (VLAA…VTHV), 282 to 302 (LGIW…IGVF), 326 to 346 (VTFI…IWLM), and 372 to 392 (VTSI…WPVL). The tract at residues 977-1044 (DSGAAAGDAE…SQSAMKNGDW (68 aa)) is disordered. Over residues 989 to 998 (SGDQSGSDTN) the composition is skewed to polar residues. A compositionally biased stretch (low complexity) spans 1003–1016 (GTTDGKSDSGSSSD).

The protein belongs to the UPF0182 family.

It is found in the cell membrane. In Bifidobacterium longum (strain NCC 2705), this protein is UPF0182 protein BL1029.